The sequence spans 335 residues: Dolichyl-diphosphooligosaccharide--protein glycosyltransferase subunit MAGT1 (335 aa).

The first 29 residues, 1–29 (MASPRWLWCVCATAAVTLLLVSKVPSASA), serve as a signal peptide directing secretion. The Extracellular segment spans residues 30 to 184 (QRKKEKVLVE…DVNIRVIRPP (155 aa)). The 129-residue stretch at 47–175 (WTNQRPVIRM…IARWIADRTD (129 aa)) folds into the Thioredoxin domain. N-linked (GlcNAc...) asparagine glycosylation occurs at Asn71. A disulfide bridge connects residues Cys87 and Cys90. Residues 185 to 205 (NYAGPLMLGLLLAVIGGLVYL) form a helical membrane-spanning segment. Residues 206–209 (RRSN) lie on the Cytoplasmic side of the membrane. The helical transmembrane segment at 210-230 (MEFLFNKTGWAFAALCFVLAM) threads the bilayer. The Extracellular segment spans residues 231–270 (TSGQMWNHIRGPPYAHKNPHTGHVNYIHGSSQAQFVAETH). The helical transmembrane segment at 271-291 (IVLLFNGGVTLGMVLLCEAAA) threads the bilayer. At 292–300 (SDMDIGKRR) the chain is on the cytoplasmic side. A helical membrane pass occupies residues 301-321 (MMCIAGIGLVVLFFSWMLSIF). Over 322–335 (RSKYHGYPYSFLMS) the chain is Extracellular.

Belongs to the OST3/OST6 family. As to quaternary structure, accessory component of the STT3B-containing form of the oligosaccharyltransferase (OST) complex. OST exists in two different complex forms which contain common core subunits RPN1, RPN2, OST48, OST4, DAD1 and TMEM258, either STT3A or STT3B as catalytic subunits, and form-specific accessory subunits. OST can form stable complexes with the Sec61 complex or with both the Sec61 and TRAP complexes. The association of TUSC3 or MAGT1 with the STT3B-containing complex seems to be mutually exclusvice.

The protein resides in the cell membrane. It localises to the endoplasmic reticulum. The protein localises to the endoplasmic reticulum membrane. It functions in the pathway protein modification; protein glycosylation. Functionally, accessory component of the STT3B-containing form of the N-oligosaccharyl transferase (OST) complex which catalyzes the transfer of a high mannose oligosaccharide from a lipid-linked oligosaccharide donor to an asparagine residue within an Asn-X-Ser/Thr consensus motif in nascent polypeptide chains. Involved in N-glycosylation of STT3B-dependent substrates. Specifically required for the glycosylation of a subset of acceptor sites that are near cysteine residues; in this function seems to act redundantly with TUSC3. In its oxidized form proposed to form transient mixed disulfides with a glycoprotein substrate to facilitate access of STT3B to the unmodified acceptor site. Also has oxidoreductase-independent functions in the STT3B-containing OST complex possibly involving substrate recognition. Could indirectly play a role in Mg(2+) transport in epithelial cells. The sequence is that of Dolichyl-diphosphooligosaccharide--protein glycosyltransferase subunit MAGT1 from Rattus norvegicus (Rat).